The sequence spans 209 residues: Probable chalcone--flavanone isomerase 3 (209 aa).

This sequence belongs to the chalcone isomerase family.

The catalysed reaction is a chalcone = a flavanone.. It participates in secondary metabolite biosynthesis; flavonoid biosynthesis. Functionally, involved in anthocyanin biosynthesis. In Arabidopsis thaliana (Mouse-ear cress), this protein is Probable chalcone--flavanone isomerase 3 (CHI3).